The chain runs to 122 residues: Ribosome-binding factor A (122 aa).

The protein belongs to the RbfA family. Monomer. Binds 30S ribosomal subunits, but not 50S ribosomal subunits or 70S ribosomes.

Its subcellular location is the cytoplasm. In terms of biological role, one of several proteins that assist in the late maturation steps of the functional core of the 30S ribosomal subunit. Associates with free 30S ribosomal subunits (but not with 30S subunits that are part of 70S ribosomes or polysomes). Required for efficient processing of 16S rRNA. May interact with the 5'-terminal helix region of 16S rRNA. This chain is Ribosome-binding factor A, found in Caldanaerobacter subterraneus subsp. tengcongensis (strain DSM 15242 / JCM 11007 / NBRC 100824 / MB4) (Thermoanaerobacter tengcongensis).